The following is a 609-amino-acid chain: Neutral protease (609 aa).

The first 24 residues, 1–24, serve as a signal peptide directing secretion; it reads MNKTQRHINWLLAVSAATALPVTA. Positions 25 to 196 are excised as a propeptide; sequence AEMINVNDGS…VLQTWDGLNH (172 aa). His-343 is a Zn(2+) binding site. Glu-344 is a catalytic residue. Zn(2+) is bound by residues His-347 and Glu-367. Residue His-426 is the Proton donor of the active site.

This sequence belongs to the peptidase M4 family. The cofactor is Zn(2+).

It localises to the secreted. The catalysed reaction is Preferential cleavage of bonds with bulky hydrophobic groups in P2 and P1'. Phe at P1' is the most favored residue, which distinguished this enzyme from thermolysin.. In terms of biological role, extracellular zinc metalloprotease. The sequence is that of Neutral protease (nprV) from Vibrio proteolyticus (Aeromonas proteolytica).